Here is a 662-residue protein sequence, read N- to C-terminus: UvrABC system protein B (662 aa).

The 390-residue stretch at 25–414 folds into the Helicase ATP-binding domain; that stretch reads AGLNSKKRSQ…GTVVELIIRP (390 aa). 38–45 serves as a coordination point for ATP; sequence GITGSGKT. Positions 91–114 match the Beta-hairpin motif; sequence YYDYYQPEAYIVRTDTFIEKDSSI. Residues 430-592 form the Helicase C-terminal domain; that stretch reads QVEDLISEIQ…IIPKTINSAI (163 aa). The 36-residue stretch at 622–657 folds into the UVR domain; it reads KSYMDKLKKEMFKAASNLEFEQAAKLRNQLKTLEKA.

This sequence belongs to the UvrB family. Forms a heterotetramer with UvrA during the search for lesions. Interacts with UvrC in an incision complex.

The protein resides in the cytoplasm. Its function is as follows. The UvrABC repair system catalyzes the recognition and processing of DNA lesions. A damage recognition complex composed of 2 UvrA and 2 UvrB subunits scans DNA for abnormalities. Upon binding of the UvrA(2)B(2) complex to a putative damaged site, the DNA wraps around one UvrB monomer. DNA wrap is dependent on ATP binding by UvrB and probably causes local melting of the DNA helix, facilitating insertion of UvrB beta-hairpin between the DNA strands. Then UvrB probes one DNA strand for the presence of a lesion. If a lesion is found the UvrA subunits dissociate and the UvrB-DNA preincision complex is formed. This complex is subsequently bound by UvrC and the second UvrB is released. If no lesion is found, the DNA wraps around the other UvrB subunit that will check the other stand for damage. In Rickettsia typhi (strain ATCC VR-144 / Wilmington), this protein is UvrABC system protein B.